The sequence spans 135 residues: MSKLNKTILADFEAAQIQRQLPEFNQGDTVVVNVKVKEGNRERVQAYEGVVIGTKNAGLNSAFTVRKISHGFGVERVFQTHSAIIDSVEVKRRGKVRAGKLYYLRGLEGKAARIKEDLAAAAQAKAARQAAAKAE.

It belongs to the bacterial ribosomal protein bL19 family.

Its function is as follows. This protein is located at the 30S-50S ribosomal subunit interface and may play a role in the structure and function of the aminoacyl-tRNA binding site. This Xanthomonas campestris pv. campestris (strain 8004) protein is Large ribosomal subunit protein bL19.